A 56-amino-acid chain; its full sequence is MATKGGREKIKLESTAGTGHFYTTSKNKKTMPEKMLIKKFDPKARKHVDYKEMKLK.

Over residues 1-12 the composition is skewed to basic and acidic residues; sequence MATKGGREKIKL. A disordered region spans residues 1–28; sequence MATKGGREKIKLESTAGTGHFYTTSKNK. Residues 15–25 show a composition bias toward polar residues; the sequence is TAGTGHFYTTS.

This sequence belongs to the bacterial ribosomal protein bL33 family.

This Albidiferax ferrireducens (strain ATCC BAA-621 / DSM 15236 / T118) (Rhodoferax ferrireducens) protein is Large ribosomal subunit protein bL33.